A 119-amino-acid chain; its full sequence is Small ribosomal subunit protein uS10 (119 aa).

Alanine 2 is subject to N-acetylalanine. A Glycyl lysine isopeptide (Lys-Gly) (interchain with G-Cter in ubiquitin) cross-link involves residue lysine 4. Position 8 is an N6-succinyllysine; alternate (lysine 8). Lysine 8 participates in a covalent cross-link: Glycyl lysine isopeptide (Lys-Gly) (interchain with G-Cter in ubiquitin); alternate. Threonine 9 carries the phosphothreonine modification. 2 positions are modified to N6-acetyllysine: lysine 34 and lysine 75. A Phosphoserine modification is found at serine 93.

It belongs to the universal ribosomal protein uS10 family. In terms of assembly, component of the 40S small ribosomal subunit. Polyubiquitinated by ZNF598 via 'Lys-63'-linked ubiquitin chains when a ribosome has stalled, initiating the ribosome quality control (RQC) pathway to degrade the potentially detrimental aberrant nascent polypeptide. Deubiquitinated by OTUD3 and USP21, antagonizing ZNF598 activity. Post-translationally, ufmylated by UFL1.

It localises to the cytoplasm. Its function is as follows. Component of the small ribosomal subunit. The ribosome is a large ribonucleoprotein complex responsible for the synthesis of proteins in the cell. In Pongo abelii (Sumatran orangutan), this protein is Small ribosomal subunit protein uS10 (RPS20).